Here is a 254-residue protein sequence, read N- to C-terminus: MDYRTVFRLDGACAAVTGAGSGIGLEICRAFAASGARLILIDREAAALDRAAQELGAAVAARIVADVTDAEAMTAAAAEAEAVAPVSILVNSAGIARLHDALETDDATWRQVMAVNVDGMFWASRAFGRAMVARGAGAIVNLGSMSGTIVNRPQFASSYMASKGAVHQLTRALAAEWAGRGVRVNALAPGYVATEMTLKMRERPELFETWLDMTPMGRCGEPSEIAAAALFLASPAASYVTGAILAVDGGYTVW.

Residues 21 to 23, Asp42, 66 to 67, Tyr159, Lys163, and 192 to 194 contribute to the NAD(+) site; these read SGI, DV, and VAT. Residue Tyr159 is the Proton acceptor of the active site. Trp254 lines the Mg(2+) pocket.

Belongs to the short-chain dehydrogenases/reductases (SDR) family. Homotetramer. It depends on a divalent metal cation as a cofactor.

It catalyses the reaction galactitol + NAD(+) = keto-L-tagatose + NADH + H(+). Inhibited by the chelating agents EDTA and alpha,alpha'-dipyridyl. Inhibited by Zn(2+) and Fe(2+). Its function is as follows. Catalyzes the interconversion of galactitol to the rare sugar L-tagatose. Shows activity with a wide range of substrates, and catalyzes the oxidation of a variety of polyvalent aliphatic alcohols and polyols to the corresponding ketones and ketoses, respectively, and in the reverse reaction, it reduces ketones with high stereoselectivity yielding the corresponding S-configurated alcohols. Shows high activity with D-threitol, xylitol, 1,2-hexanediol, 1,2-pentanediol, 2-hexanol, L-erythrulose, D-ribulose and acetoin. Specific for NAD(+). The chain is Galactitol 2-dehydrogenase (L-tagatose-forming) from Cereibacter sphaeroides (Rhodobacter sphaeroides).